A 123-amino-acid polypeptide reads, in one-letter code: UPF0102 protein PFL_5073 (123 aa).

The protein belongs to the UPF0102 family.

The chain is UPF0102 protein PFL_5073 from Pseudomonas fluorescens (strain ATCC BAA-477 / NRRL B-23932 / Pf-5).